We begin with the raw amino-acid sequence, 342 residues long: Phenylalanine--tRNA ligase alpha subunit (342 aa).

Glu257 contributes to the Mg(2+) binding site.

The protein belongs to the class-II aminoacyl-tRNA synthetase family. Phe-tRNA synthetase alpha subunit type 1 subfamily. As to quaternary structure, tetramer of two alpha and two beta subunits. It depends on Mg(2+) as a cofactor.

It is found in the cytoplasm. It carries out the reaction tRNA(Phe) + L-phenylalanine + ATP = L-phenylalanyl-tRNA(Phe) + AMP + diphosphate + H(+). The chain is Phenylalanine--tRNA ligase alpha subunit from Chlamydia trachomatis serovar A (strain ATCC VR-571B / DSM 19440 / HAR-13).